Here is a 252-residue protein sequence, read N- to C-terminus: Probable transcriptional regulatory protein all4276 (252 aa).

It belongs to the TACO1 family.

It localises to the cytoplasm. This Nostoc sp. (strain PCC 7120 / SAG 25.82 / UTEX 2576) protein is Probable transcriptional regulatory protein all4276.